Here is a 349-residue protein sequence, read N- to C-terminus: Deoxyguanosinetriphosphate triphosphohydrolase-like protein (349 aa).

An HD domain is found at 80–197 (RLTHTLEVAQ…VKYSDKIAYV (118 aa)).

This sequence belongs to the dGTPase family. Type 2 subfamily.

In Clostridium tetani (strain Massachusetts / E88), this protein is Deoxyguanosinetriphosphate triphosphohydrolase-like protein.